Here is a 422-residue protein sequence, read N- to C-terminus: Serine--tRNA ligase (422 aa).

Residue 226–228 (TSE) coordinates L-serine. ATP-binding positions include 257–259 (RRE) and Val273. An L-serine-binding site is contributed by Glu280. 344–347 (ELTS) is a binding site for ATP. An L-serine-binding site is contributed by Thr379.

Belongs to the class-II aminoacyl-tRNA synthetase family. Type-1 seryl-tRNA synthetase subfamily. Homodimer. The tRNA molecule binds across the dimer.

The protein resides in the cytoplasm. It catalyses the reaction tRNA(Ser) + L-serine + ATP = L-seryl-tRNA(Ser) + AMP + diphosphate + H(+). The catalysed reaction is tRNA(Sec) + L-serine + ATP = L-seryl-tRNA(Sec) + AMP + diphosphate + H(+). The protein operates within aminoacyl-tRNA biosynthesis; selenocysteinyl-tRNA(Sec) biosynthesis; L-seryl-tRNA(Sec) from L-serine and tRNA(Sec): step 1/1. In terms of biological role, catalyzes the attachment of serine to tRNA(Ser). Is also able to aminoacylate tRNA(Sec) with serine, to form the misacylated tRNA L-seryl-tRNA(Sec), which will be further converted into selenocysteinyl-tRNA(Sec). The chain is Serine--tRNA ligase from Corynebacterium glutamicum (strain ATCC 13032 / DSM 20300 / JCM 1318 / BCRC 11384 / CCUG 27702 / LMG 3730 / NBRC 12168 / NCIMB 10025 / NRRL B-2784 / 534).